The following is a 793-amino-acid chain: Coiled-coil domain-containing protein 175 (793 aa).

5 coiled-coil regions span residues 131 to 163 (EINT…NEAL), 205 to 377 (KRED…VLSE), 431 to 535 (KTVY…MLMK), 562 to 679 (LPQL…KYRE), and 716 to 745 (LVDN…QHVS).

This Homo sapiens (Human) protein is Coiled-coil domain-containing protein 175 (CCDC175).